A 256-amino-acid polypeptide reads, in one-letter code: Alcohol dehydrogenase (256 aa).

Residue 12–35 (FVAGLGGIGLDTSKELVKRDLKNL) participates in NAD(+) binding. Residue Ser-140 participates in substrate binding. Tyr-153 (proton acceptor) is an active-site residue.

The protein belongs to the short-chain dehydrogenases/reductases (SDR) family. Homodimer.

The enzyme catalyses a primary alcohol + NAD(+) = an aldehyde + NADH + H(+). The catalysed reaction is a secondary alcohol + NAD(+) = a ketone + NADH + H(+). The protein is Alcohol dehydrogenase (Adh) of Drosophila orena (Fruit fly).